We begin with the raw amino-acid sequence, 172 residues long: Glutamyl-tRNA(Gln) amidotransferase subunit C-3, mitochondrial (172 aa).

The segment at 49 to 71 is disordered; that stretch reads KHPSKVPQRPNKSTIDGQSTPTR. Polar residues predominate over residues 58 to 71; it reads PNKSTIDGQSTPTR.

This sequence belongs to the GatC family. Subunit of the heterotrimeric GatCAB amidotransferase (AdT) complex, composed of A, B and C subunits.

It is found in the mitochondrion. The catalysed reaction is L-glutamyl-tRNA(Gln) + L-glutamine + ATP + H2O = L-glutaminyl-tRNA(Gln) + L-glutamate + ADP + phosphate + H(+). Its function is as follows. Allows the formation of correctly charged Gln-tRNA(Gln) through the transamidation of misacylated Glu-tRNA(Gln) in the mitochondria. The reaction takes place in the presence of glutamine and ATP through an activated gamma-phospho-Glu-tRNA(Gln). The sequence is that of Glutamyl-tRNA(Gln) amidotransferase subunit C-3, mitochondrial from Culex quinquefasciatus (Southern house mosquito).